Here is a 1074-residue protein sequence, read N- to C-terminus: DNA primase (1074 aa).

The segment at 1012-1052 (CVRFKHARARRASARSYLALNVDAHGRLCVCVIQQCFAAKC) adopts a CHC2-type zinc-finger fold.

Belongs to the herpesviridae DNA primase family. As to quaternary structure, associates with the helicase and the primase-associated factor to form the helicase-primase factor.

The protein resides in the host nucleus. In terms of biological role, essential component of the helicase/primase complex. Unwinds the DNA at the replication forks and generates single-stranded DNA for both leading and lagging strand synthesis. The primase initiates primer synthesis and thereby produces large amount of short RNA primers on the lagging strand that the polymerase elongates using dNTPs. The sequence is that of DNA primase (MDV066) from Gallus gallus (Chicken).